A 344-amino-acid polypeptide reads, in one-letter code: Transcription factor JunB (344 aa).

Glycyl lysine isopeptide (Lys-Gly) (interchain with G-Cter in SUMO2) cross-links involve residues Lys-4, Lys-33, and Lys-36. Residues 51–65 (KGPGARGPGPEGSGA) show a composition bias toward gly residues. Positions 51–75 (KGPGARGPGPEGSGAGSYFSGQGSD) are disordered. Residue Lys-81 forms a Glycyl lysine isopeptide (Lys-Gly) (interchain with G-Cter in SUMO2) linkage. A phosphothreonine mark is found at Thr-102 and Thr-104. Ser-117 carries the phosphoserine modification. Lys-138 participates in a covalent cross-link: Glycyl lysine isopeptide (Lys-Gly) (interchain with G-Cter in SUMO2). Disordered regions lie at residues 181-202 (NLSSYSPASAPSGGSGTAVGTG) and 237-257 (KEEPQTVPEARSRDATPPVSP). Over residues 183–192 (SSYSPASAPS) the composition is skewed to low complexity. The residue at position 237 (Lys-237) is an N6-acetyllysine; alternate. Residue Lys-237 forms a Glycyl lysine isopeptide (Lys-Gly) (interchain with G-Cter in SUMO1); alternate linkage. Lys-237 participates in a covalent cross-link: Glycyl lysine isopeptide (Lys-Gly) (interchain with G-Cter in SUMO2); alternate. Residues 237–250 (KEEPQTVPEARSRD) are compositionally biased toward basic and acidic residues. Ser-248 is subject to Phosphoserine. Thr-252 carries the phosphothreonine modification. Residue Ser-256 is modified to Phosphoserine. The interval 265–292 (RIKVERKRLRNRLAATKCRKRKLERIAR) is basic motif. In terms of domain architecture, bZIP spans 265–328 (RIKVERKRLR…AQLKQKVMTH (64 aa)). Residues 293–321 (LEDKVKTLKAENAGLSSAAGLLREQVAQL) form a leucine-zipper region. Residue Lys-340 forms a Glycyl lysine isopeptide (Lys-Gly) (interchain with G-Cter in SUMO2) linkage.

Belongs to the bZIP family. Jun subfamily. As to quaternary structure, binds DNA as a homodimer or as a heterodimer with another member of the Jun/Fos family. Component of an AP-1 transcription factor complex composed of JUN-FOS heterodimers. As part of the AP-1 transcription factor complex, forms heterodimers with FOSB, thereby binding to the AP-1 consensus sequence and stimulating transcription. Interacts with NFE2 (via its WW domains). In terms of processing, ubiquitinated by ITCH, leading to its degradation.

It is found in the nucleus. Transcription factor involved in regulating gene activity following the primary growth factor response. Binds to the DNA sequence 5'-TGA[GC]TCA-3'. Heterodimerizes with proteins of the FOS family to form an AP-1 transcription complex, thereby enhancing its DNA binding activity to an AP-1 consensus sequence 5'-TGA[GC]TCA-3' and enhancing its transcriptional activity. This chain is Transcription factor JunB (Junb), found in Mus musculus (Mouse).